We begin with the raw amino-acid sequence, 316 residues long: Lipoyl synthase (316 aa).

[4Fe-4S] cluster contacts are provided by Cys-66, Cys-71, Cys-77, Cys-92, Cys-96, Cys-99, and Ser-306. Positions 78 to 295 (FNRGTATFMI…NLIAFDLGFK (218 aa)) constitute a Radical SAM core domain.

It belongs to the radical SAM superfamily. Lipoyl synthase family. The cofactor is [4Fe-4S] cluster.

Its subcellular location is the cytoplasm. The catalysed reaction is [[Fe-S] cluster scaffold protein carrying a second [4Fe-4S](2+) cluster] + N(6)-octanoyl-L-lysyl-[protein] + 2 oxidized [2Fe-2S]-[ferredoxin] + 2 S-adenosyl-L-methionine + 4 H(+) = [[Fe-S] cluster scaffold protein] + N(6)-[(R)-dihydrolipoyl]-L-lysyl-[protein] + 4 Fe(3+) + 2 hydrogen sulfide + 2 5'-deoxyadenosine + 2 L-methionine + 2 reduced [2Fe-2S]-[ferredoxin]. It functions in the pathway protein modification; protein lipoylation via endogenous pathway; protein N(6)-(lipoyl)lysine from octanoyl-[acyl-carrier-protein]: step 2/2. In terms of biological role, catalyzes the radical-mediated insertion of two sulfur atoms into the C-6 and C-8 positions of the octanoyl moiety bound to the lipoyl domains of lipoate-dependent enzymes, thereby converting the octanoylated domains into lipoylated derivatives. The polypeptide is Lipoyl synthase (Wigglesworthia glossinidia brevipalpis).